A 513-amino-acid polypeptide reads, in one-letter code: Histidine ammonia-lyase (513 aa).

Positions 143–145 form a cross-link, 5-imidazolinone (Ala-Gly); it reads ASG. At Ser-144 the chain carries 2,3-didehydroalanine (Ser).

This sequence belongs to the PAL/histidase family. In terms of processing, contains an active site 4-methylidene-imidazol-5-one (MIO), which is formed autocatalytically by cyclization and dehydration of residues Ala-Ser-Gly.

The protein resides in the cytoplasm. The enzyme catalyses L-histidine = trans-urocanate + NH4(+). It functions in the pathway amino-acid degradation; L-histidine degradation into L-glutamate; N-formimidoyl-L-glutamate from L-histidine: step 1/3. The chain is Histidine ammonia-lyase from Xanthomonas axonopodis pv. citri (strain 306).